A 192-amino-acid polypeptide reads, in one-letter code: Potassium-transporting ATPase KdpC subunit (192 aa).

The chain crosses the membrane as a helical span at residues 7-27 (PLIVLFVVLAALTGLAYPAVM).

Belongs to the KdpC family. In terms of assembly, the system is composed of three essential subunits: KdpA, KdpB and KdpC.

The protein localises to the cell inner membrane. Functionally, part of the high-affinity ATP-driven potassium transport (or Kdp) system, which catalyzes the hydrolysis of ATP coupled with the electrogenic transport of potassium into the cytoplasm. This subunit acts as a catalytic chaperone that increases the ATP-binding affinity of the ATP-hydrolyzing subunit KdpB by the formation of a transient KdpB/KdpC/ATP ternary complex. The chain is Potassium-transporting ATPase KdpC subunit from Paraburkholderia xenovorans (strain LB400).